Reading from the N-terminus, the 302-residue chain is Glutaminase (302 aa).

Substrate is bound by residues serine 61, asparagine 111, glutamate 155, asparagine 162, tyrosine 186, tyrosine 238, and valine 256.

The protein belongs to the glutaminase family. Homotetramer.

The enzyme catalyses L-glutamine + H2O = L-glutamate + NH4(+). The protein is Glutaminase of Pseudomonas aeruginosa (strain LESB58).